The primary structure comprises 286 residues: NAD kinase (286 aa).

Catalysis depends on Asp-67, which acts as the Proton acceptor. NAD(+) is bound by residues 67–68 (DG), Arg-72, 141–142 (ND), Arg-152, Asp-171, 182–187 (TAYSLS), and Gln-242.

Belongs to the NAD kinase family. A divalent metal cation is required as a cofactor.

Its subcellular location is the cytoplasm. It carries out the reaction NAD(+) + ATP = ADP + NADP(+) + H(+). In terms of biological role, involved in the regulation of the intracellular balance of NAD and NADP, and is a key enzyme in the biosynthesis of NADP. Catalyzes specifically the phosphorylation on 2'-hydroxyl of the adenosine moiety of NAD to yield NADP. In Ruminiclostridium cellulolyticum (strain ATCC 35319 / DSM 5812 / JCM 6584 / H10) (Clostridium cellulolyticum), this protein is NAD kinase.